A 360-amino-acid polypeptide reads, in one-letter code: MVSEGATRKELNLCFENMKMEGVLISEWKDIPVELLMKILNLVDDRTVIIASCICSGWRDAVSLGLTRLSLSWCKKNMNSLVLSLAPKFVKLQTLVLRQDKPQLEDNAVEAIANHCHELQDLDLSKSSKITDHSLYSLARGCTNLTKLNLSGCTSFSDTALAHLTRFCRKLKILNLCGCVEAVSDNTLQAIGENCNQLQSLNLGWCENISDDGVMSLAYGCPDLRTLDLCSCVLITDESVVALANRCIHLRSLGLYYCRNITDRAMYSLAQSGVKNKHEMWRAVKKGKFDEEGLRSLNISQCTYLTPSAVQAVCDTFPALHTCSGRHSLVMSGCLNLQSVHCACILQAHRTHTVYPHPAH.

Residues 25–76 (ISEWKDIPVELLMKILNLVDDRTVIIASCICSGWRDAVSLGLTRLSLSWCKK) enclose the F-box domain. LRR repeat units lie at residues 77–99 (NMNS…VLRQ), 101–126 (KPQL…DLSK), 127–152 (SSKI…NLSG), 153–178 (CTSF…NLCG), 180–205 (VEAV…NLGW), 206–231 (CENI…DLCS), 232–257 (CVLI…GLYY), 258–301 (CRNI…NISQ), and 302–333 (CTYL…VMSG).

Component of SCF(SKP2B) E3 ubiquitin ligase complexes, which mediate the ubiquitination and subsequent proteasomal degradation of the cyclin-dependent kinase inhibitor KRP1. Does not interact with auxin. The chain is F-box protein SKP2B (SKP2B) from Arabidopsis thaliana (Mouse-ear cress).